We begin with the raw amino-acid sequence, 304 residues long: ATP synthase gamma chain (304 aa).

It belongs to the ATPase gamma chain family. F-type ATPases have 2 components, CF(1) - the catalytic core - and CF(0) - the membrane proton channel. CF(1) has five subunits: alpha(3), beta(3), gamma(1), delta(1), epsilon(1). CF(0) has three main subunits: a, b and c.

It localises to the cell membrane. In terms of biological role, produces ATP from ADP in the presence of a proton gradient across the membrane. The gamma chain is believed to be important in regulating ATPase activity and the flow of protons through the CF(0) complex. This chain is ATP synthase gamma chain, found in Mycobacterium marinum (strain ATCC BAA-535 / M).